A 338-amino-acid chain; its full sequence is Microtubule-associated protein RP/EB family member 2 (338 aa).

A disordered region spans residues 1-21 (MPGPTQALSPNGENNNDIIQD). Positions 57–159 (TMSRHDIIAW…FIQWFKKFFD (103 aa)) constitute a Calponin-homology (CH) domain. Disordered regions lie at residues 171 to 241 (EARQ…KDLE) and 300 to 338 (SEEHESHTEEHEGEEQVHEQPSSRRSTDSRSVSDNFHFV). A compositionally biased stretch (low complexity) spans 200-234 (SPTAGAAKSSPASKPGSTPSRPSSAKKAAPSSSAS). The EB1 C-terminal domain maps to 236-306 (SDKDLETQVI…LYASEEHESH (71 aa)). A compositionally biased stretch (basic and acidic residues) spans 300–327 (SEEHESHTEEHEGEEQVHEQPSSRRSTD). The span at 328–338 (SRSVSDNFHFV) shows a compositional bias: low complexity.

Belongs to the MAPRE family.

It is found in the cytoplasm. The protein resides in the cytoskeleton. In terms of biological role, may be involved in microtubule polymerization, and spindle function by stabilizing microtubules and anchoring them at centrosomes. The protein is Microtubule-associated protein RP/EB family member 2 (MAPRE2) of Gallus gallus (Chicken).